Here is a 181-residue protein sequence, read N- to C-terminus: MTANRKELAVERAAKKEAVEQLNGVFKTTSVAVVAQYSGLTVAQMQKLRQQMKQAGASVKVSKNRLAKIALEGTDVVAIGPMLKGPTVIATSNDPVAAPKVAIEFAKANEKFVIVGGSMGKTVLNVDGVKALASLPSLDELRGKIVGLIVAPATKLAQLANAPAGKLARVIQAHASKGEAA.

The protein belongs to the universal ribosomal protein uL10 family. Part of the ribosomal stalk of the 50S ribosomal subunit. The N-terminus interacts with L11 and the large rRNA to form the base of the stalk. The C-terminus forms an elongated spine to which L12 dimers bind in a sequential fashion forming a multimeric L10(L12)X complex.

Forms part of the ribosomal stalk, playing a central role in the interaction of the ribosome with GTP-bound translation factors. This is Large ribosomal subunit protein uL10 from Bradyrhizobium diazoefficiens (strain JCM 10833 / BCRC 13528 / IAM 13628 / NBRC 14792 / USDA 110).